The primary structure comprises 427 residues: 2-oxoglutarate and iron-dependent oxygenase JMJD4 (427 aa).

Residues 147–306 form the JmjC domain; that stretch reads SLVNDLEDIF…NMWHFLQQEL (160 aa). Residues His194, Asp196, and His274 each contribute to the Fe cation site.

This sequence belongs to the JMJD6 family. As to quaternary structure, interacts with ETF1. Interacts with the ETF1-GSPT1 complex. The cofactor is Fe(2+).

The protein localises to the cytoplasm. It catalyses the reaction L-lysyl-[protein] + 2-oxoglutarate + O2 = 4-hydroxy-L-lysyl-[protein] + succinate + CO2. Functionally, catalyzes the 2-oxoglutarate and iron-dependent C4-lysyl hydroxylation of ETF1 at 'Lys-63' thereby promoting the translational termination efficiency of ETF1. Not essential for embryonic stem cell (ESC) maintenance and the embryonic and postnatal development. This Mus musculus (Mouse) protein is 2-oxoglutarate and iron-dependent oxygenase JMJD4 (Jmjd4).